We begin with the raw amino-acid sequence, 219 residues long: Peroxiredoxin-5, mitochondrial (219 aa).

Residues 1–57 constitute a mitochondrion transit peptide; it reads MRLGWLRVLGCRPGSVVSRATIVEGASTTAAGTRGCLEGILEWTFGGVRGFRSAAVA. The region spanning 61–219 is the Thioredoxin domain; that stretch reads IKVGDAIPSV…SLAPNILSQL (159 aa). Lysine 80 is subject to N6-acetyllysine. At lysine 88 the chain carries N6-acetyllysine; alternate. Lysine 88 is modified (N6-succinyllysine; alternate). The active-site Cysteine sulfenic acid (-SOH) intermediate is the cysteine 105. Residue cysteine 105 is the site of S-palmitoyl cysteine attachment. The cysteines at positions 105 and 209 are disulfide-linked. At lysine 121 the chain carries N6-succinyllysine. Serine 187 carries the post-translational modification Phosphoserine. Residues 217 to 219 carry the Microbody targeting signal motif; that stretch reads SQL.

The protein belongs to the peroxiredoxin family. Prx5 subfamily. In terms of assembly, monomer. Post-translationally, S-palmitoylated. Palmitoylation occurs on the active site, inhibiting its reactivity; therefore PRDX5 palmitoylation status determines its antioxidant capacity. In terms of processing, S-palmitoylated. Depalmitoylated by ABHD10.

Its subcellular location is the mitochondrion. It localises to the cytoplasm. The protein resides in the peroxisome matrix. The enzyme catalyses a hydroperoxide + [thioredoxin]-dithiol = an alcohol + [thioredoxin]-disulfide + H2O. Thiol-specific peroxidase that catalyzes the reduction of hydrogen peroxide and organic hydroperoxides to water and alcohols, respectively. Plays a role in cell protection against oxidative stress by detoxifying peroxides and as sensor of hydrogen peroxide-mediated signaling events. The protein is Peroxiredoxin-5, mitochondrial (PRDX5) of Bos taurus (Bovine).